Reading from the N-terminus, the 455-residue chain is Bifunctional protein GlmU (455 aa).

The tract at residues M1–K225 is pyrophosphorylase. Residues L6 to G9, K20, Q71, G76 to T77, Y98 to D100, G135, E150, N165, and N223 contribute to the UDP-N-acetyl-alpha-D-glucosamine site. D100 is a binding site for Mg(2+). N223 contacts Mg(2+). The tract at residues A226–D246 is linker. The N-acetyltransferase stretch occupies residues G247–E455. Residues R329 and K347 each coordinate UDP-N-acetyl-alpha-D-glucosamine. Catalysis depends on H359, which acts as the Proton acceptor. Residues Y362 and N373 each coordinate UDP-N-acetyl-alpha-D-glucosamine. Acetyl-CoA-binding positions include A376, N382–Y383, S401, A419, and R436.

The protein in the N-terminal section; belongs to the N-acetylglucosamine-1-phosphate uridyltransferase family. In the C-terminal section; belongs to the transferase hexapeptide repeat family. As to quaternary structure, homotrimer. Mg(2+) serves as cofactor.

The protein resides in the cytoplasm. The catalysed reaction is alpha-D-glucosamine 1-phosphate + acetyl-CoA = N-acetyl-alpha-D-glucosamine 1-phosphate + CoA + H(+). It catalyses the reaction N-acetyl-alpha-D-glucosamine 1-phosphate + UTP + H(+) = UDP-N-acetyl-alpha-D-glucosamine + diphosphate. It functions in the pathway nucleotide-sugar biosynthesis; UDP-N-acetyl-alpha-D-glucosamine biosynthesis; N-acetyl-alpha-D-glucosamine 1-phosphate from alpha-D-glucosamine 6-phosphate (route II): step 2/2. The protein operates within nucleotide-sugar biosynthesis; UDP-N-acetyl-alpha-D-glucosamine biosynthesis; UDP-N-acetyl-alpha-D-glucosamine from N-acetyl-alpha-D-glucosamine 1-phosphate: step 1/1. Its pathway is bacterial outer membrane biogenesis; LPS lipid A biosynthesis. Its function is as follows. Catalyzes the last two sequential reactions in the de novo biosynthetic pathway for UDP-N-acetylglucosamine (UDP-GlcNAc). The C-terminal domain catalyzes the transfer of acetyl group from acetyl coenzyme A to glucosamine-1-phosphate (GlcN-1-P) to produce N-acetylglucosamine-1-phosphate (GlcNAc-1-P), which is converted into UDP-GlcNAc by the transfer of uridine 5-monophosphate (from uridine 5-triphosphate), a reaction catalyzed by the N-terminal domain. The protein is Bifunctional protein GlmU of Aromatoleum aromaticum (strain DSM 19018 / LMG 30748 / EbN1) (Azoarcus sp. (strain EbN1)).